The following is a 262-amino-acid chain: Enoyl-[acyl-carrier-protein] reductase [NADH] FabI (262 aa).

Residues Gly13, 19–20 (SI), Gln40, 64–65 (DV), and Ile92 each bind NAD(+). Substrate is bound at residue Ala95. Catalysis depends on proton acceptor residues Tyr146 and Tyr156. Residues Lys163 and 192–196 (IRTLA) contribute to the NAD(+) site.

It belongs to the short-chain dehydrogenases/reductases (SDR) family. FabI subfamily. In terms of assembly, homotetramer.

The enzyme catalyses a 2,3-saturated acyl-[ACP] + NAD(+) = a (2E)-enoyl-[ACP] + NADH + H(+). It catalyses the reaction (2E)-butenoyl-[ACP] + NADH + H(+) = butanoyl-[ACP] + NAD(+). It carries out the reaction (2E)-decenoyl-[ACP] + NADH + H(+) = decanoyl-[ACP] + NAD(+). The catalysed reaction is (2E)-hexadecenoyl-[ACP] + NADH + H(+) = hexadecanoyl-[ACP] + NAD(+). The enzyme catalyses (2E,9Z)-hexadecadienoyl-[ACP] + NADH + H(+) = (9Z)-hexadecenoyl-[ACP] + NAD(+). It catalyses the reaction (2E)-5-methylhexenoyl-[ACP] + NADH + H(+) = 5-methylhexanoyl-[ACP] + NAD(+). It functions in the pathway lipid metabolism; fatty acid biosynthesis. It participates in cofactor biosynthesis; biotin biosynthesis. Its activity is regulated as follows. Inhibited by diazaborines, triclosan (5-chloro-2-2,4-dichlorophenoxyphenol), 1,4-disubstituted imidazoles, 1,4-benzodiazepine derivatives, naphthyridinone derivatives, luteolin and curcumin. The antibiotic diazaborine interferes with the activity by binding to the protein and NAD. Catalyzes the reduction of a carbon-carbon double bond in an enoyl moiety that is covalently linked to an acyl carrier protein (ACP). Involved in the elongation cycle of fatty acid which are used in the lipid metabolism and in the biotin biosynthesis. This is Enoyl-[acyl-carrier-protein] reductase [NADH] FabI (fabI) from Escherichia coli (strain K12).